Reading from the N-terminus, the 203-residue chain is Small ribosomal subunit protein uS4 (203 aa).

In terms of domain architecture, S4 RNA-binding spans 92-152 (LRLATVLLRA…EKSRKLVPFI (61 aa)).

This sequence belongs to the universal ribosomal protein uS4 family. As to quaternary structure, part of the 30S ribosomal subunit. Contacts protein S5. The interaction surface between S4 and S5 is involved in control of translational fidelity.

In terms of biological role, one of the primary rRNA binding proteins, it binds directly to 16S rRNA where it nucleates assembly of the body of the 30S subunit. With S5 and S12 plays an important role in translational accuracy. This Thermobifida fusca (strain YX) protein is Small ribosomal subunit protein uS4.